Reading from the N-terminus, the 214-residue chain is Large ribosomal subunit protein uL3 (214 aa).

The disordered stretch occupies residues 133–153 (GRATHGNSRSHNVPGSIGMAQ). Position 153 is an N5-methylglutamine (Gln-153).

Belongs to the universal ribosomal protein uL3 family. As to quaternary structure, part of the 50S ribosomal subunit. Forms a cluster with proteins L14 and L19. Methylated by PrmB.

Functionally, one of the primary rRNA binding proteins, it binds directly near the 3'-end of the 23S rRNA, where it nucleates assembly of the 50S subunit. This chain is Large ribosomal subunit protein uL3, found in Cupriavidus metallidurans (strain ATCC 43123 / DSM 2839 / NBRC 102507 / CH34) (Ralstonia metallidurans).